The following is a 497-amino-acid chain: Cytochrome P450 26A1 (497 aa).

Residue Cys-442 participates in heme binding.

Belongs to the cytochrome P450 family. Heme serves as cofactor.

The protein localises to the endoplasmic reticulum membrane. The protein resides in the microsome membrane. It catalyses the reaction all-trans-retinoate + reduced [NADPH--hemoprotein reductase] + O2 = all-trans-(4S)-hydroxyretinoate + oxidized [NADPH--hemoprotein reductase] + H2O + H(+). It carries out the reaction all-trans-(4S)-hydroxyretinoate + reduced [NADPH--hemoprotein reductase] + O2 = all-trans-(4S,16)-dihydroxyretinoate + oxidized [NADPH--hemoprotein reductase] + H2O + H(+). The catalysed reaction is all-trans-retinoate + reduced [NADPH--hemoprotein reductase] + O2 = all-trans-18-hydroxyretinoate + oxidized [NADPH--hemoprotein reductase] + H2O + H(+). Its function is as follows. A cytochrome P450 monooxygenase involved in the metabolism of retinoates (RAs), the active metabolites of vitamin A, and critical signaling molecules in animals. RAs exist as at least four different isomers: all-trans-RA (atRA), 9-cis-RA, 13-cis-RA, and 9,13-dicis-RA, where atRA is considered to be the biologically active isomer, although 9-cis-RA and 13-cis-RA also have activity. Catalyzes the hydroxylation of atRA primarily at C-4 and C-18, thereby contributing to the regulation of atRA homeostasis and signaling. Hydroxylation of atRA limits its biological activity and initiates a degradative process leading to its eventual elimination. Involved in the convertion of atRA to all-trans-4-oxo-RA. Able to metabolize other RAs such as 9-cis, 13-cis and 9,13-di-cis RA. Can oxidize all-trans-13,14-dihydroretinoate (DRA) to metabolites which could include all-trans-4-oxo-DRA, all-trans-4-hydroxy-DRA, all-trans-5,8-epoxy-DRA, and all-trans-18-hydroxy-DRA. May play a role in the oxidative metabolism of xenobiotics such as tazarotenic acid. The sequence is that of Cytochrome P450 26A1 from Mus musculus (Mouse).